Consider the following 472-residue polypeptide: MSSGTLYDKVWDLHRVAELPGGSTQLFVGLHLIHEVTSPQAFSALKDKGLLVRCPERTVATVDHIVPTTSQQRPFADPLAEEMLSTLERNCQEYGIPLNNIGSGRQGIVHVIAPELGLTQPGMTVACGDSHTSTHGAFGAIAFGIGTSQVRDVLASQSLAMNKLKVRRIQVNGLLPEGVSAKDLILHVIRHLGVKGGVGYAYEFAGSAIEALSMEERMTLCNMAIEGGARCGYVNPDQVTFEYLKGRPHAPEGDAWTRAVAWWSSLATDANATVDDEVVFDAAAIPPTVTWGITPGQGLGIDETVPSLDQLDPGERPIAEEAYRYMDLQPGTAIAGVPVDVCFIGSCTNGRLSDLRAAADVARGRQVAEGIKAFVVPGSEQVAKAAEAEGLDAVFRAAGFEWREPGCSMCLAMNPDRLEGRQISASSSNRNFKGRQGSASGRTLLMSPAMVAAAAVNGRVTDVRTLISPSAS.

[4Fe-4S] cluster-binding residues include Cys347, Cys407, and Cys410.

Belongs to the aconitase/IPM isomerase family. LeuC type 1 subfamily. As to quaternary structure, heterodimer of LeuC and LeuD. Requires [4Fe-4S] cluster as cofactor.

The enzyme catalyses (2R,3S)-3-isopropylmalate = (2S)-2-isopropylmalate. It functions in the pathway amino-acid biosynthesis; L-leucine biosynthesis; L-leucine from 3-methyl-2-oxobutanoate: step 2/4. Its function is as follows. Catalyzes the isomerization between 2-isopropylmalate and 3-isopropylmalate, via the formation of 2-isopropylmaleate. This Synechococcus sp. (strain CC9605) protein is 3-isopropylmalate dehydratase large subunit.